The primary structure comprises 697 residues: Elongation factor G 2 (697 aa).

Positions 5–280 (SKYRNIGIFA…AVVDYLPAPD (276 aa)) constitute a tr-type G domain. GTP contacts are provided by residues 14–21 (AHVDAGKT), 78–82 (DTPGH), and 132–135 (NKLD).

The protein belongs to the TRAFAC class translation factor GTPase superfamily. Classic translation factor GTPase family. EF-G/EF-2 subfamily.

The protein localises to the cytoplasm. Catalyzes the GTP-dependent ribosomal translocation step during translation elongation. During this step, the ribosome changes from the pre-translocational (PRE) to the post-translocational (POST) state as the newly formed A-site-bound peptidyl-tRNA and P-site-bound deacylated tRNA move to the P and E sites, respectively. Catalyzes the coordinated movement of the two tRNA molecules, the mRNA and conformational changes in the ribosome. The polypeptide is Elongation factor G 2 (Shewanella sp. (strain MR-7)).